Consider the following 218-residue polypeptide: Thiamine-phosphate synthase (218 aa).

Residues 43-47 and N75 each bind 4-amino-2-methyl-5-(diphosphooxymethyl)pyrimidine; that span reads QLRMK. Residues D76 and D95 each coordinate Mg(2+). T114 contributes to the 4-amino-2-methyl-5-(diphosphooxymethyl)pyrimidine binding site. 140 to 142 contacts 2-[(2R,5Z)-2-carboxy-4-methylthiazol-5(2H)-ylidene]ethyl phosphate; the sequence is TST. Position 143 (K143) interacts with 4-amino-2-methyl-5-(diphosphooxymethyl)pyrimidine. 2-[(2R,5Z)-2-carboxy-4-methylthiazol-5(2H)-ylidene]ethyl phosphate contacts are provided by residues G171 and 191 to 192; that span reads VS.

It belongs to the thiamine-phosphate synthase family. Requires Mg(2+) as cofactor.

The catalysed reaction is 2-[(2R,5Z)-2-carboxy-4-methylthiazol-5(2H)-ylidene]ethyl phosphate + 4-amino-2-methyl-5-(diphosphooxymethyl)pyrimidine + 2 H(+) = thiamine phosphate + CO2 + diphosphate. It carries out the reaction 2-(2-carboxy-4-methylthiazol-5-yl)ethyl phosphate + 4-amino-2-methyl-5-(diphosphooxymethyl)pyrimidine + 2 H(+) = thiamine phosphate + CO2 + diphosphate. The enzyme catalyses 4-methyl-5-(2-phosphooxyethyl)-thiazole + 4-amino-2-methyl-5-(diphosphooxymethyl)pyrimidine + H(+) = thiamine phosphate + diphosphate. It functions in the pathway cofactor biosynthesis; thiamine diphosphate biosynthesis; thiamine phosphate from 4-amino-2-methyl-5-diphosphomethylpyrimidine and 4-methyl-5-(2-phosphoethyl)-thiazole: step 1/1. In terms of biological role, condenses 4-methyl-5-(beta-hydroxyethyl)thiazole monophosphate (THZ-P) and 2-methyl-4-amino-5-hydroxymethyl pyrimidine pyrophosphate (HMP-PP) to form thiamine monophosphate (TMP). In Myxococcus xanthus (strain DK1622), this protein is Thiamine-phosphate synthase.